Consider the following 168-residue polypeptide: NADH-quinone oxidoreductase subunit B (168 aa).

[4Fe-4S] cluster contacts are provided by C49, C50, C114, and C144.

Belongs to the complex I 20 kDa subunit family. As to quaternary structure, NDH-1 is composed of 14 different subunits. Subunits NuoB, C, D, E, F, and G constitute the peripheral sector of the complex. [4Fe-4S] cluster serves as cofactor.

It is found in the cell membrane. It carries out the reaction a quinone + NADH + 5 H(+)(in) = a quinol + NAD(+) + 4 H(+)(out). NDH-1 shuttles electrons from NADH, via FMN and iron-sulfur (Fe-S) centers, to quinones in the respiratory chain. Couples the redox reaction to proton translocation (for every two electrons transferred, four hydrogen ions are translocated across the cytoplasmic membrane), and thus conserves the redox energy in a proton gradient. The polypeptide is NADH-quinone oxidoreductase subunit B (Wolbachia sp. subsp. Brugia malayi (strain TRS)).